We begin with the raw amino-acid sequence, 691 residues long: MKLLLLSALLGCLATAYAAPAEGIVKWCVKSEQELRKCHDLAAKVAEFSCVRKDGSFECIQAIKGGEADAITLDGGDIYTAGLTNYGLQPIIAEDYGEDSDTCYYAVAVAKKGTAFGFKTLRGKKSCHTGLGKSAGWNIPIGTLVTESQIRWAGIEDRPVESAVSDFFNASCAPGATMGSKLCQLCKGDCSRSHKEPYYDYAGAFQCLKDGAGDVAFIKPLAVPAAEKASYELLCKDGTRASIDSYKTCHLARVPAHAVVSRKDPELANRIYNKLVAVKDFNLFSSDGYAAKNLMFKDSAQKLVQLPTTTDSFLYLGAEYMSTIRSLKKSQATGASSRAIKWCAVGHAEKGKCDTWTINSFADGESKISCQDAPTVEECIKKIMRKEADAIAVDGGEVYTAGKCGLVPVMVEQYDADLCSAPGEASSYYAVAVAKKGSGLTWKTLKGKRSCHTGLGRTAGWNIPMGLIHQETNDCDFTKYFSKGCAPGSEVGSPFCAQCKGSGKARGGDEDRCKARSEEQYYGYTGAFRCLVEDAGDVAFIKHTIVPESTDGNGPDWAKDLKSSDFELLCQDGTTQPVTKFSECHLAKVPAHAVITRPETRGDVVSILLELQAKFGSSGSDSSFRMFQSSVEKNLLFKDSTKCLQEIPKGTKYQDFLGKEYMIAMQSLRKCSDSTSDLEKACTFHSCQQKE.

The N-terminal stretch at 1–18 is a signal peptide; sequence MKLLLLSALLGCLATAYA. 2 consecutive Transferrin-like domains span residues 25–329 and 340–670; these read VKWC…SLKK and IKWC…SLRK. A disulfide bridge connects residues C28 and C50. Residues D74 and Y104 each coordinate Fe(3+). Intrachain disulfides connect C127–C207, C172–C186, and C235–C249. Positions 129, 134, 136, and 137 each coordinate hydrogencarbonate. N-linked (GlcNAc...) asparagine glycosylation occurs at N169. Y201 is a binding site for Fe(3+). Position 257 (H257) interacts with Fe(3+). 2 disulfide bridges follow: C343/C379 and C353/C370. Positions 394 and 428 each coordinate Fe(3+). 7 cysteine pairs are disulfide-bonded: C404/C682, C419/C643, C451/C530, C475/C671, C485/C499, C496/C513, and C570/C584. Hydrogencarbonate contacts are provided by T453, R457, A459, and G460. Residue Y524 participates in Fe(3+) binding. Position 592 (H592) interacts with Fe(3+).

The protein belongs to the transferrin family. In terms of assembly, monomer. As to expression, abundant in liver and serum with smaller amounts found in the stomach and kidney.

It is found in the secreted. Functionally, transferrins are iron binding transport proteins which can bind two Fe(3+) ions in association with the binding of an anion, usually bicarbonate. It is responsible for the transport of iron from sites of absorption and heme degradation to those of storage and utilization. Serum transferrin may also have a further role in stimulating cell proliferation. The protein is Serotransferrin-2 (tf2) of Salmo salar (Atlantic salmon).